Reading from the N-terminus, the 198-residue chain is dITP/XTP pyrophosphatase (198 aa).

7 to 12 (THNPHK) contacts substrate. The Mg(2+) site is built by Glu-40 and Asp-69. The Proton acceptor role is filled by Asp-69. Residues Thr-70, 151-154 (FGYD), Lys-174, and 179-180 (HR) contribute to the substrate site.

The protein belongs to the HAM1 NTPase family. Homodimer. Mg(2+) serves as cofactor.

It catalyses the reaction XTP + H2O = XMP + diphosphate + H(+). The catalysed reaction is dITP + H2O = dIMP + diphosphate + H(+). It carries out the reaction ITP + H2O = IMP + diphosphate + H(+). Pyrophosphatase that catalyzes the hydrolysis of nucleoside triphosphates to their monophosphate derivatives, with a high preference for the non-canonical purine nucleotides XTP (xanthosine triphosphate), dITP (deoxyinosine triphosphate) and ITP. Seems to function as a house-cleaning enzyme that removes non-canonical purine nucleotides from the nucleotide pool, thus preventing their incorporation into DNA/RNA and avoiding chromosomal lesions. This is dITP/XTP pyrophosphatase from Thermoanaerobacter sp. (strain X514).